The sequence spans 313 residues: tRNA uridine(34) hydroxylase (313 aa).

In terms of domain architecture, Rhodanese spans 124–218 (SDPEVLLIDT…YLEEVPQEET (95 aa)). The active-site Cysteine persulfide intermediate is the Cys-178.

This sequence belongs to the TrhO family.

The enzyme catalyses uridine(34) in tRNA + AH2 + O2 = 5-hydroxyuridine(34) in tRNA + A + H2O. Its function is as follows. Catalyzes oxygen-dependent 5-hydroxyuridine (ho5U) modification at position 34 in tRNAs. This is tRNA uridine(34) hydroxylase from Pseudomonas fluorescens (strain Pf0-1).